The primary structure comprises 633 residues: Acetylcholinesterase (633 aa).

The first 23 residues, 1-23 (MKILDALLFPVIFIMFFIHLSIA), serve as a signal peptide directing secretion. Residues Cys-91 and Cys-118 are joined by a disulfide bond. 2 N-linked (GlcNAc...) asparagine glycosylation sites follow: Asn-133 and Asn-184. The Acyl-ester intermediate role is filled by Ser-225. The cysteines at positions 279 and 290 are disulfide-linked. Asn-283 carries N-linked (GlcNAc...) asparagine glycosylation. Glu-352 (charge relay system) is an active-site residue. An N-linked (GlcNAc...) asparagine glycan is attached at Asn-368. Cys-427 and Cys-579 are joined by a disulfide. His-494 functions as the Charge relay system in the catalytic mechanism. N-linked (GlcNAc...) asparagine glycosylation is found at Asn-511 and Asn-591.

It belongs to the type-B carboxylesterase/lipase family.

The protein resides in the synapse. It localises to the secreted. It is found in the cell membrane. It catalyses the reaction acetylcholine + H2O = choline + acetate + H(+). In terms of biological role, terminates signal transduction at the neuromuscular junction by rapid hydrolysis of the acetylcholine released into the synaptic cleft. The sequence is that of Acetylcholinesterase (ache) from Electrophorus electricus (Electric eel).